The sequence spans 262 residues: uncharacterized protein (262 aa).

The region spanning 6 to 70 (LRINQFLAHY…LKNKKFSVLV (65 aa)) is the S4 RNA-binding domain. Catalysis depends on Asp-108, which acts as the Nucleophile.

Belongs to the pseudouridine synthase RsuA family.

It catalyses the reaction a uridine in RNA = a pseudouridine in RNA. This is an uncharacterized protein from Helicobacter pylori (strain ATCC 700392 / 26695) (Campylobacter pylori).